A 234-amino-acid polypeptide reads, in one-letter code: Probable glycerol uptake facilitator protein (234 aa).

2 helical membrane-spanning segments follow: residues 3-23 (VYLA…GVVA) and 36-56 (GWIV…YLVG). The NPA 1 signature appears at 64 to 66 (NPA). 3 helical membrane passes run 82 to 102 (VPGY…LVYL), 134 to 154 (LLTE…IGAN), and 164 to 184 (LVGF…GYAI). The short motif at 185–187 (NPA) is the NPA 2 element. Residues 214–234 (VPIIGPIIGGILGASLYNWLF) traverse the membrane as a helical segment.

It belongs to the MIP/aquaporin (TC 1.A.8) family.

It is found in the cell membrane. The catalysed reaction is glycerol(in) = glycerol(out). Its function is as follows. Mediates glycerol diffusion across the cytoplasmic membrane via a pore-type mechanism. This Thermotoga maritima (strain ATCC 43589 / DSM 3109 / JCM 10099 / NBRC 100826 / MSB8) protein is Probable glycerol uptake facilitator protein (glpF).